The sequence spans 462 residues: Chitinase-like mite allergen Der f 18.0101 (462 aa).

The first 25 residues, 1 to 25 (MTRFSLTVLAVLAACFGSNIRPNVA), serve as a signal peptide directing secretion. Positions 29–378 (PKTVCYYESW…HAIQSNYYHG (350 aa)) constitute a GH18 domain. Cys-33 and Cys-58 are joined by a disulfide. An N-linked (GlcNAc...) asparagine glycan is attached at Asn-338. Residues 404–462 (VFHCHEEGFFRDKTYCATYYECKKGDFGLEKTVHHCANHLQAFDEVSRTCIDHTKIPGC) enclose the Chitin-binding type-2 domain. Residues Cys-439 and Cys-453 are joined by a disulfide bond.

It belongs to the glycosyl hydrolase 18 family. Chitinase class II subfamily. As to expression, expressed in the upper digestive tract. Staining is observed in the ventriculus, and in very rare individuals, also in the intestine or esophagus. No expression in fecal pellets neither inside the rectum nor defecated outside of the body.

The protein resides in the secreted. Probably a non-catalytic chitinase-like protein, which binds to insoluble chitin and enhances the activity of the catalytic chitinases. Has weak chitin-binding activity. This chain is Chitinase-like mite allergen Der f 18.0101, found in Dermatophagoides farinae (American house dust mite).